The chain runs to 315 residues: Ribosomal RNA large subunit methyltransferase F (315 aa).

This sequence belongs to the methyltransferase superfamily. METTL16/RlmF family.

The protein resides in the cytoplasm. It carries out the reaction adenosine(1618) in 23S rRNA + S-adenosyl-L-methionine = N(6)-methyladenosine(1618) in 23S rRNA + S-adenosyl-L-homocysteine + H(+). In terms of biological role, specifically methylates the adenine in position 1618 of 23S rRNA. The sequence is that of Ribosomal RNA large subunit methyltransferase F from Aeromonas salmonicida (strain A449).